Here is a 1634-residue protein sequence, read N- to C-terminus: DNA polymerase (1634 aa).

2 consecutive DOD-type homing endonuclease domains span residues 552-693 and 1163-1295; these read LIGI…RLGI and FLGF…LVGI.

This sequence belongs to the DNA polymerase type-B family. In terms of processing, this protein undergoes a protein self splicing that involves a post-translational excision of the intervening region (intein) followed by peptide ligation.

It carries out the reaction DNA(n) + a 2'-deoxyribonucleoside 5'-triphosphate = DNA(n+1) + diphosphate. In Methanocaldococcus jannaschii (strain ATCC 43067 / DSM 2661 / JAL-1 / JCM 10045 / NBRC 100440) (Methanococcus jannaschii), this protein is DNA polymerase (pol).